The primary structure comprises 208 residues: Large ribosomal subunit protein uL4 (208 aa).

The interval 44–79 (QRQGTHKSKERSEISGSTRKIGRQKGGGGARRGDMN) is disordered.

It belongs to the universal ribosomal protein uL4 family. In terms of assembly, part of the 50S ribosomal subunit.

Its function is as follows. One of the primary rRNA binding proteins, this protein initially binds near the 5'-end of the 23S rRNA. It is important during the early stages of 50S assembly. It makes multiple contacts with different domains of the 23S rRNA in the assembled 50S subunit and ribosome. In terms of biological role, forms part of the polypeptide exit tunnel. The protein is Large ribosomal subunit protein uL4 of Bacteroides fragilis (strain YCH46).